A 263-amino-acid chain; its full sequence is Regulatory protein RecX (263 aa).

This sequence belongs to the RecX family.

The protein resides in the cytoplasm. Functionally, modulates RecA activity. The polypeptide is Regulatory protein RecX (Bacillus licheniformis (strain ATCC 14580 / DSM 13 / JCM 2505 / CCUG 7422 / NBRC 12200 / NCIMB 9375 / NCTC 10341 / NRRL NRS-1264 / Gibson 46)).